A 343-amino-acid chain; its full sequence is Phenylalanine--tRNA ligase alpha subunit (343 aa).

Mg(2+) is bound at residue glutamate 268.

The protein belongs to the class-II aminoacyl-tRNA synthetase family. Phe-tRNA synthetase alpha subunit type 1 subfamily. In terms of assembly, tetramer of two alpha and two beta subunits. The cofactor is Mg(2+).

It is found in the cytoplasm. The enzyme catalyses tRNA(Phe) + L-phenylalanine + ATP = L-phenylalanyl-tRNA(Phe) + AMP + diphosphate + H(+). The protein is Phenylalanine--tRNA ligase alpha subunit of Cupriavidus necator (strain ATCC 17699 / DSM 428 / KCTC 22496 / NCIMB 10442 / H16 / Stanier 337) (Ralstonia eutropha).